The primary structure comprises 147 residues: Methylated-DNA--protein-cysteine methyltransferase (147 aa).

C112 functions as the Nucleophile; methyl group acceptor in the catalytic mechanism.

This sequence belongs to the MGMT family.

It localises to the cytoplasm. It carries out the reaction a 6-O-methyl-2'-deoxyguanosine in DNA + L-cysteinyl-[protein] = S-methyl-L-cysteinyl-[protein] + a 2'-deoxyguanosine in DNA. It catalyses the reaction a 4-O-methyl-thymidine in DNA + L-cysteinyl-[protein] = a thymidine in DNA + S-methyl-L-cysteinyl-[protein]. Functionally, involved in the cellular defense against the biological effects of O6-methylguanine (O6-MeG) and O4-methylthymine (O4-MeT) in DNA. Repairs the methylated nucleobase in DNA by stoichiometrically transferring the methyl group to a cysteine residue in the enzyme. This is a suicide reaction: the enzyme is irreversibly inactivated. In Archaeoglobus fulgidus (strain ATCC 49558 / DSM 4304 / JCM 9628 / NBRC 100126 / VC-16), this protein is Methylated-DNA--protein-cysteine methyltransferase.